Consider the following 960-residue polypeptide: Pentatricopeptide repeat-containing protein At3g63370, chloroplastic (960 aa).

The transit peptide at 1 to 64 directs the protein to the chloroplast; it reads MEYAVTNMRL…PKLACFDGVL (64 aa). 20 PPR repeats span residues 79–109, 115–145, 146–180, 181–215, 216–246, 248–282, 283–317, 319–349, 350–384, 385–419, 420–450, 451–485, 486–516, 520–550, 551–585, 586–620, 621–651, 652–686, 687–717, and 723–753; these read PVEA…IFKT, LDFL…MPDR, TAFA…GVPL, GLSS…GYHS, TGFI…FQEK, DAVL…GPAP, NSYT…STHS, ELYV…MNNA, DVVT…GHKS, DEVS…GWDS, NLQV…MHDK, DLIS…RMEI, DEMI…ILRK, DTVI…IKGK, DVVS…GLSA, DSVA…GFCL, EGSI…IERK, GLLQ…NVSP, DHIS…MEHE, and WPEH…MKTE. The interval 758–833 is type E motif; the sequence is VWCALLAACR…HPGCSWIEMD (76 aa). The interval 834-864 is type E(+) motif; that stretch reads GKVHKFTARDKSHPESKEIYEKLSEVTRKLE. Residues 865–960 form a type DYW motif region; that stretch reads REVGYVADTK…SGLCSCGDSW (96 aa).

The protein belongs to the PPR family. PCMP-H subfamily.

It localises to the plastid. Its subcellular location is the chloroplast. Involved in RNA editing event in chloroplasts. Required for the editing of a single site in rps14 transcript. This is Pentatricopeptide repeat-containing protein At3g63370, chloroplastic (PCMP-H83) from Arabidopsis thaliana (Mouse-ear cress).